A 208-amino-acid chain; its full sequence is Receptor expression-enhancing protein 6 (208 aa).

3 helical membrane passes run 49–69, 93–113, and 115–135; these read GAFL…GFVY, WVIY…LHWF, and FYYV…SWNG. Residues 187–208 are disordered; the sequence is VGPAESEPRSLPSSAHTEPTVD. Polar residues predominate over residues 197 to 208; sequence LPSSAHTEPTVD.

It belongs to the DP1 family.

Its subcellular location is the endoplasmic reticulum membrane. The protein localises to the cytoplasmic vesicle. It localises to the clathrin-coated vesicle membrane. In terms of biological role, required correct function and survival of retinal photoreceptors. Required for retinal development. In rod photoreceptors, facilitates stability and/or trafficking of guanylate cyclases and is required to maintain endoplasmic reticulum and mitochondrial homeostasis. May play a role in clathrin-coated intracellular vesicle trafficking of proteins from the endoplasmic reticulum to the retinal rod plasma membrane. The polypeptide is Receptor expression-enhancing protein 6 (Danio rerio (Zebrafish)).